A 151-amino-acid chain; its full sequence is MLP-like protein 168 (151 aa).

This sequence belongs to the MLP family.

In Arabidopsis thaliana (Mouse-ear cress), this protein is MLP-like protein 168 (MLP168).